The chain runs to 415 residues: L-threonine dehydratase biosynthetic IlvA (415 aa).

N6-(pyridoxal phosphate)lysine is present on Lys53. Pyridoxal 5'-phosphate-binding positions include Asn80, 183–187 (GGGGL), and Ser308. In terms of domain architecture, ACT-like spans 332-406 (HYFIIQFPQR…KGFEYREINK (75 aa)).

This sequence belongs to the serine/threonine dehydratase family. As to quaternary structure, homotetramer. Pyridoxal 5'-phosphate serves as cofactor.

It catalyses the reaction L-threonine = 2-oxobutanoate + NH4(+). It functions in the pathway amino-acid biosynthesis; L-isoleucine biosynthesis; 2-oxobutanoate from L-threonine: step 1/1. Its function is as follows. Catalyzes the anaerobic formation of alpha-ketobutyrate and ammonia from threonine in a two-step reaction. The first step involved a dehydration of threonine and a production of enamine intermediates (aminocrotonate), which tautomerizes to its imine form (iminobutyrate). Both intermediates are unstable and short-lived. The second step is the nonenzymatic hydrolysis of the enamine/imine intermediates to form 2-ketobutyrate and free ammonia. In the low water environment of the cell, the second step is accelerated by RidA. In Halalkalibacterium halodurans (strain ATCC BAA-125 / DSM 18197 / FERM 7344 / JCM 9153 / C-125) (Bacillus halodurans), this protein is L-threonine dehydratase biosynthetic IlvA (ilvA).